Reading from the N-terminus, the 102-residue chain is Small ribosomal subunit protein uS10 (102 aa).

This sequence belongs to the universal ribosomal protein uS10 family. As to quaternary structure, part of the 30S ribosomal subunit.

Functionally, involved in the binding of tRNA to the ribosomes. In Dehalococcoides mccartyi (strain ATCC BAA-2266 / KCTC 15142 / 195) (Dehalococcoides ethenogenes (strain 195)), this protein is Small ribosomal subunit protein uS10.